Reading from the N-terminus, the 1061-residue chain is NACHT, LRR and PYD domains-containing protein 12 (1061 aa).

The region spanning 1 to 95 (MLRTAGRDGL…WERGQREDLV (95 aa)) is the Pyrin domain. An FISNA domain is found at 129–201 (YRDYVRRKFR…SPIKIETLFE (73 aa)). The NACHT domain occupies 211–528 (RTVVMQGAAG…EFFAAMYYIL (318 aa)). 217–224 (GAAGIGKS) is an ATP binding site. LRR repeat units follow at residues 828-848 (HLVE…RLLC), 857-878 (RLRT…ELAS), 885-906 (SLRE…LLCE), 914-935 (KLQT…GLSV), 942-962 (NLRE…WLLA), 971-992 (RLQK…NLYF), 999-1020 (TLTD…LLCK), and 1028-1049 (KLRV…RLAA).

This sequence belongs to the NLRP family. As to quaternary structure, interacts (via pyrin domain) with ASC. Interacts (via pyrin domain) with FAF1 (via UBA domain). Interacts with MAP3K14; this interaction promotes proteasomal degradation of MAP3K14. Interacts with NOD2; this interaction promotes degradation of NOD2 through the ubiquitin-proteasome pathway. Interacts with HSPA1A and HSPA8. Interacts with HSP90AA1. Interacts with TRIM25; this interaction inhibits RIGI-mediated signaling pathway. Detected only in peripheral blood leukocytes, predominantly in eosinophils and granulocytes, and at lower levels in monocytes.

It is found in the cytoplasm. In terms of biological role, plays an essential role as an potent mitigator of inflammation. Primarily expressed in dendritic cells and macrophages, inhibits both canonical and non-canonical NF-kappa-B and ERK activation pathways. Functions as a negative regulator of NOD2 by targeting it to degradation via the proteasome pathway. In turn, promotes bacterial tolerance. Also inhibits the RIGI-mediated immune signaling against RNA viruses by reducing the E3 ubiquitin ligase TRIM25-mediated 'Lys-63'-linked RIGI activation but enhancing the E3 ubiquitin ligase RNF125-mediated 'Lys-48'-linked RIGI degradation. Also acts as a negative regulator of inflammatory response to mitigate obesity and obesity-associated diseases in adipose tissue. The polypeptide is NACHT, LRR and PYD domains-containing protein 12 (NLRP12) (Homo sapiens (Human)).